The primary structure comprises 298 residues: Glutamyl-Q tRNA(Asp) synthetase (298 aa).

L-glutamate-binding positions include 9 to 13 (RFAPS) and E45. A 'HIGH' region motif is present at residues 12-22 (PSPSGELHFGS). Residues C101, C103, Y115, and C119 each contribute to the Zn(2+) site. The L-glutamate site is built by Y172 and R190. The short motif at 228 to 232 (KLSKQ) is the 'KMSKS' region element. ATP is bound at residue K231.

Belongs to the class-I aminoacyl-tRNA synthetase family. GluQ subfamily. Zn(2+) is required as a cofactor.

In terms of biological role, catalyzes the tRNA-independent activation of glutamate in presence of ATP and the subsequent transfer of glutamate onto a tRNA(Asp). Glutamate is transferred on the 2-amino-5-(4,5-dihydroxy-2-cyclopenten-1-yl) moiety of the queuosine in the wobble position of the QUC anticodon. The polypeptide is Glutamyl-Q tRNA(Asp) synthetase (Salmonella typhimurium (strain LT2 / SGSC1412 / ATCC 700720)).